The sequence spans 294 residues: tRNA pseudouridine synthase B (294 aa).

Residue aspartate 38 is the Nucleophile of the active site.

Belongs to the pseudouridine synthase TruB family. Type 1 subfamily.

The enzyme catalyses uridine(55) in tRNA = pseudouridine(55) in tRNA. Functionally, responsible for synthesis of pseudouridine from uracil-55 in the psi GC loop of transfer RNAs. The polypeptide is tRNA pseudouridine synthase B (Clostridium perfringens (strain 13 / Type A)).